Here is a 173-residue protein sequence, read N- to C-terminus: Translation initiation factor IF-3 (173 aa).

The protein belongs to the IF-3 family. In terms of assembly, monomer.

Its subcellular location is the cytoplasm. Functionally, IF-3 binds to the 30S ribosomal subunit and shifts the equilibrium between 70S ribosomes and their 50S and 30S subunits in favor of the free subunits, thus enhancing the availability of 30S subunits on which protein synthesis initiation begins. This Enterococcus faecalis (strain ATCC 700802 / V583) protein is Translation initiation factor IF-3.